A 76-amino-acid polypeptide reads, in one-letter code: DNA-directed RNA polymerase subunit omega (76 aa).

Belongs to the RNA polymerase subunit omega family. In cyanobacteria the RNAP catalytic core is composed of 2 alpha, 1 beta, 1 beta', 1 gamma and 1 omega subunit. When a sigma factor is associated with the core the holoenzyme is formed, which can initiate transcription.

It carries out the reaction RNA(n) + a ribonucleoside 5'-triphosphate = RNA(n+1) + diphosphate. Its function is as follows. Promotes RNA polymerase assembly. Latches the N- and C-terminal regions of the beta' subunit thereby facilitating its interaction with the beta and alpha subunits. This Acaryochloris marina (strain MBIC 11017) protein is DNA-directed RNA polymerase subunit omega.